The chain runs to 252 residues: Cell division protein ZapD (252 aa).

This sequence belongs to the ZapD family. In terms of assembly, interacts with FtsZ.

Its subcellular location is the cytoplasm. In terms of biological role, cell division factor that enhances FtsZ-ring assembly. Directly interacts with FtsZ and promotes bundling of FtsZ protofilaments, with a reduction in FtsZ GTPase activity. The protein is Cell division protein ZapD of Cupriavidus taiwanensis (strain DSM 17343 / BCRC 17206 / CCUG 44338 / CIP 107171 / LMG 19424 / R1) (Ralstonia taiwanensis (strain LMG 19424)).